Here is a 134-residue protein sequence, read N- to C-terminus: MSFIREFKEFVMRGNVIDLAVAVVIGAAFGKIVTALVDKIISPLIGVMVGGIDFSKLSLTLKAATVDTAGKEVPAVVIGYGDFLNTILQFIIIAFAIFIIVKMINKVTNKQPLPPETPSEDVLLLREIRDSLKK.

Transmembrane regions (helical) follow at residues 16–36 and 81–101; these read VIDL…VTAL and GDFL…FIIV.

This sequence belongs to the MscL family. In terms of assembly, homopentamer.

The protein localises to the cell inner membrane. Functionally, channel that opens in response to stretch forces in the membrane lipid bilayer. May participate in the regulation of osmotic pressure changes within the cell. The sequence is that of Large-conductance mechanosensitive channel from Xylella fastidiosa (strain M12).